The primary structure comprises 258 residues: Undecaprenyl-diphosphatase (258 aa).

The next 8 helical transmembrane spans lie at 14–34 (AAGE…PWLL), 39–59 (QGLT…LIYF), 79–99 (GKIL…GVLF), 106–126 (VFRS…ILHL), 136–156 (VALN…ALMP), 176–196 (AESA…AAVL), 209–229 (AFIA…KFLM), and 237–257 (FNIF…TALM).

Belongs to the UppP family.

The protein localises to the cell membrane. It carries out the reaction di-trans,octa-cis-undecaprenyl diphosphate + H2O = di-trans,octa-cis-undecaprenyl phosphate + phosphate + H(+). Its function is as follows. Catalyzes the dephosphorylation of undecaprenyl diphosphate (UPP). Confers resistance to bacitracin. This Elusimicrobium minutum (strain Pei191) protein is Undecaprenyl-diphosphatase.